A 98-amino-acid chain; its full sequence is NADH-ubiquinone oxidoreductase chain 4L (98 aa).

The next 3 membrane-spanning stretches (helical) occupy residues Pro2–Phe22, Ser28–Ile48, and Ile61–Val81.

It belongs to the complex I subunit 4L family. Core subunit of respiratory chain NADH dehydrogenase (Complex I) which is composed of 45 different subunits.

It is found in the mitochondrion inner membrane. It catalyses the reaction a ubiquinone + NADH + 5 H(+)(in) = a ubiquinol + NAD(+) + 4 H(+)(out). In terms of biological role, core subunit of the mitochondrial membrane respiratory chain NADH dehydrogenase (Complex I) which catalyzes electron transfer from NADH through the respiratory chain, using ubiquinone as an electron acceptor. Part of the enzyme membrane arm which is embedded in the lipid bilayer and involved in proton translocation. This chain is NADH-ubiquinone oxidoreductase chain 4L (MT-ND4L), found in Allocebus trichotis (Hairy-eared dwarf lemur).